A 612-amino-acid chain; its full sequence is Transcription factor ffsR (612 aa).

A compositionally biased stretch (polar residues) spans 1 to 12; that stretch reads MDTLTAPTTQSE. The interval 1 to 21 is disordered; sequence MDTLTAPTTQSEQPPPPLTAS. Positions 28–60 form a DNA-binding region, zn(2)-C6 fungal-type; it reads CDRCRSHKLRCNRDLMTSTNSPCQRCRKARVKC. A compositionally biased stretch (basic and acidic residues) spans 73–82; it reads EELKNGENVH. Disordered stretches follow at residues 73 to 130, 154 to 249, and 451 to 470; these read EELK…SMSG, DGST…VTSS, and GQGP…TTTN. 3 stretches are compositionally biased toward polar residues: residues 92 to 103, 154 to 169, and 238 to 249; these read SHRTASTPSNHA, DGST…TNGS, and LTQQHPAGVTSS. Positions 458 to 470 are enriched in low complexity; sequence PSQGSSSRSTTTN.

The protein localises to the nucleus. In terms of biological role, transcription factor that specifically regulates the expression of the gene cluster that mediates the biosynthesis of the cytotoxic leucine-containing cytochalasans, including aspochalasin C, aspochalasin E, TMC-169, flavichalasine F, aspergillin PZ, aspochalasin M and flavichalasine G. The protein is Transcription factor ffsR of Aspergillus flavipes.